Consider the following 346-residue polypeptide: Flap endonuclease 1 (346 aa).

Residues 1–102 (MGVTELGKLI…AEIEERRKVK (102 aa)) are N-domain. 7 residues coordinate Mg(2+): aspartate 31, aspartate 84, glutamate 156, glutamate 158, aspartate 177, aspartate 179, and aspartate 239. Residues 120–261 (DVAKYMKRAV…KALKLVWEFG (142 aa)) form an I-domain region.

This sequence belongs to the XPG/RAD2 endonuclease family. FEN1 subfamily. Interacts with PCNA. PCNA stimulates the nuclease activity without altering cleavage specificity. Mg(2+) is required as a cofactor.

Structure-specific nuclease with 5'-flap endonuclease and 5'-3' exonuclease activities involved in DNA replication and repair. During DNA replication, cleaves the 5'-overhanging flap structure that is generated by displacement synthesis when DNA polymerase encounters the 5'-end of a downstream Okazaki fragment. Binds the unpaired 3'-DNA end and kinks the DNA to facilitate 5' cleavage specificity. Cleaves one nucleotide into the double-stranded DNA from the junction in flap DNA, leaving a nick for ligation. Also involved in the base excision repair (BER) pathway. Acts as a genome stabilization factor that prevents flaps from equilibrating into structures that lead to duplications and deletions. Also possesses 5'-3' exonuclease activity on nicked or gapped double-stranded DNA. The protein is Flap endonuclease 1 of Pyrobaculum islandicum (strain DSM 4184 / JCM 9189 / GEO3).